We begin with the raw amino-acid sequence, 435 residues long: Tol-Pal system protein TolB (435 aa).

The N-terminal stretch at 1-20 (MRKIIAGVFIFVFLISNLYA) is a signal peptide.

It belongs to the TolB family. As to quaternary structure, the Tol-Pal system is composed of five core proteins: the inner membrane proteins TolA, TolQ and TolR, the periplasmic protein TolB and the outer membrane protein Pal. They form a network linking the inner and outer membranes and the peptidoglycan layer.

Its subcellular location is the periplasm. Its function is as follows. Part of the Tol-Pal system, which plays a role in outer membrane invagination during cell division and is important for maintaining outer membrane integrity. The protein is Tol-Pal system protein TolB of Francisella tularensis subsp. holarctica (strain LVS).